Reading from the N-terminus, the 274-residue chain is Rhamnulose-1-phosphate aldolase (274 aa).

The active site involves glutamate 117. Residues histidine 141, histidine 143, and histidine 212 each coordinate Zn(2+).

It belongs to the aldolase class II family. RhaD subfamily. In terms of assembly, homotetramer. Zn(2+) serves as cofactor.

The protein resides in the cytoplasm. The enzyme catalyses L-rhamnulose 1-phosphate = (S)-lactaldehyde + dihydroxyacetone phosphate. It functions in the pathway carbohydrate degradation; L-rhamnose degradation; glycerone phosphate from L-rhamnose: step 3/3. Functionally, catalyzes the reversible cleavage of L-rhamnulose-1-phosphate to dihydroxyacetone phosphate (DHAP) and L-lactaldehyde. In Escherichia coli O81 (strain ED1a), this protein is Rhamnulose-1-phosphate aldolase.